The sequence spans 259 residues: Acetylglutamate kinase (259 aa).

Residues 45-46, arginine 67, and asparagine 159 contribute to the substrate site; that span reads GG.

Belongs to the acetylglutamate kinase family. ArgB subfamily.

Its subcellular location is the cytoplasm. The catalysed reaction is N-acetyl-L-glutamate + ATP = N-acetyl-L-glutamyl 5-phosphate + ADP. It participates in amino-acid biosynthesis; L-arginine biosynthesis; N(2)-acetyl-L-ornithine from L-glutamate: step 2/4. Functionally, catalyzes the ATP-dependent phosphorylation of N-acetyl-L-glutamate. This Aeromonas hydrophila subsp. hydrophila (strain ATCC 7966 / DSM 30187 / BCRC 13018 / CCUG 14551 / JCM 1027 / KCTC 2358 / NCIMB 9240 / NCTC 8049) protein is Acetylglutamate kinase.